A 1331-amino-acid polypeptide reads, in one-letter code: DNA-directed RNA polymerase subunit beta' (1331 aa).

Positions 60, 62, 75, and 78 each coordinate Zn(2+). Residues aspartate 535, aspartate 537, and aspartate 539 each coordinate Mg(2+). Zn(2+) contacts are provided by cysteine 902, cysteine 979, cysteine 986, and cysteine 989.

It belongs to the RNA polymerase beta' chain family. The RNAP catalytic core consists of 2 alpha, 1 beta, 1 beta' and 1 omega subunit. When a sigma factor is associated with the core the holoenzyme is formed, which can initiate transcription. Mg(2+) serves as cofactor. The cofactor is Zn(2+).

The enzyme catalyses RNA(n) + a ribonucleoside 5'-triphosphate = RNA(n+1) + diphosphate. Its function is as follows. DNA-dependent RNA polymerase catalyzes the transcription of DNA into RNA using the four ribonucleoside triphosphates as substrates. This is DNA-directed RNA polymerase subunit beta' from Corynebacterium aurimucosum (strain ATCC 700975 / DSM 44827 / CIP 107346 / CN-1) (Corynebacterium nigricans).